A 1207-amino-acid polypeptide reads, in one-letter code: DNA-directed RNA polymerase subunit beta' (1207 aa).

Zn(2+) contacts are provided by Cys-60, Cys-62, Cys-75, and Cys-78. Mg(2+) is bound by residues Asp-449, Asp-451, and Asp-453. 4 residues coordinate Zn(2+): Cys-822, Cys-896, Cys-903, and Cys-906.

The protein belongs to the RNA polymerase beta' chain family. In terms of assembly, the RNAP catalytic core consists of 2 alpha, 1 beta, 1 beta' and 1 omega subunit. When a sigma factor is associated with the core the holoenzyme is formed, which can initiate transcription. The cofactor is Mg(2+). Zn(2+) serves as cofactor.

The enzyme catalyses RNA(n) + a ribonucleoside 5'-triphosphate = RNA(n+1) + diphosphate. In terms of biological role, DNA-dependent RNA polymerase catalyzes the transcription of DNA into RNA using the four ribonucleoside triphosphates as substrates. The chain is DNA-directed RNA polymerase subunit beta' from Staphylococcus aureus (strain NCTC 8325 / PS 47).